The chain runs to 125 residues: Large ribosomal subunit protein bL12 (125 aa).

This sequence belongs to the bacterial ribosomal protein bL12 family. Homodimer. Part of the ribosomal stalk of the 50S ribosomal subunit. Forms a multimeric L10(L12)X complex, where L10 forms an elongated spine to which 2 to 4 L12 dimers bind in a sequential fashion. Binds GTP-bound translation factors.

In terms of biological role, forms part of the ribosomal stalk which helps the ribosome interact with GTP-bound translation factors. Is thus essential for accurate translation. This chain is Large ribosomal subunit protein bL12, found in Francisella tularensis subsp. novicida (strain U112).